We begin with the raw amino-acid sequence, 824 residues long: Type IV secretion system protein PtlC homolog (824 aa).

ATP is bound at residue 456–463 (GQSGSGKT).

Belongs to the TrbE/VirB4 family.

The protein localises to the cell membrane. This is Type IV secretion system protein PtlC homolog (ptlC) from Bordetella bronchiseptica (strain ATCC BAA-588 / NCTC 13252 / RB50) (Alcaligenes bronchisepticus).